A 37-amino-acid polypeptide reads, in one-letter code: Delta/kappa-conotoxin Mo3964 (37 aa).

3 cysteine pairs are disulfide-bonded: Cys-4–Cys-12, Cys-11–Cys-27, and Cys-21–Cys-34.

As to expression, expressed by the venom duct.

It is found in the secreted. This toxin reduces the outward currents that are due to the opening of voltage-gated potassium channels in DRG neurons. In addition, leftward shift in the presence of this toxin is observed in averaged normalized conductance-voltage plot of outward sodium currents (Nav1.2/SCN2A). This is Delta/kappa-conotoxin Mo3964 from Conus monile (Necklace cone).